A 284-amino-acid chain; its full sequence is 2,3,4,5-tetrahydropyridine-2,6-dicarboxylate N-succinyltransferase (284 aa).

Belongs to the transferase hexapeptide repeat family.

The protein resides in the cytoplasm. The enzyme catalyses (S)-2,3,4,5-tetrahydrodipicolinate + succinyl-CoA + H2O = (S)-2-succinylamino-6-oxoheptanedioate + CoA. It participates in amino-acid biosynthesis; L-lysine biosynthesis via DAP pathway; LL-2,6-diaminopimelate from (S)-tetrahydrodipicolinate (succinylase route): step 1/3. The protein is 2,3,4,5-tetrahydropyridine-2,6-dicarboxylate N-succinyltransferase of Brucella abortus (strain S19).